Reading from the N-terminus, the 84-residue chain is CDC42 small effector protein 2 (84 aa).

S-palmitoyl cysteine attachment occurs at residues Cys-10 and Cys-11. The region spanning 29-42 (IGEPTNFAHTAHVG) is the CRIB domain. Phosphoserine is present on residues Ser-43 and Ser-52.

This sequence belongs to the CDC42SE/SPEC family. In terms of assembly, interacts with CDC42 (in GTP-bound form). Interacts weakly with RAC1 and not at all with RHOA.

Its subcellular location is the cytoplasm. It is found in the cytoskeleton. The protein localises to the cell membrane. The protein resides in the cell projection. It localises to the phagocytic cup. Functionally, probably involved in the organization of the actin cytoskeleton by acting downstream of CDC42, inducing actin filament assembly. Alters CDC42-induced cell shape changes. In activated T-cells, may play a role in CDC42-mediated F-actin accumulation at the immunological synapse. May play a role in early contractile events in phagocytosis in macrophages. In Pongo abelii (Sumatran orangutan), this protein is CDC42 small effector protein 2 (CDC42SE2).